Consider the following 322-residue polypeptide: Eukaryotic translation initiation factor 3 subunit I (322 aa).

WD repeat units lie at residues 4–43 (GHER…RLGT), 46–85 (GHQG…VIAS), 141–180 (MTES…KVVD), 184–223 (DHSA…CLKS), and 281–322 (GHFG…NIFE).

It belongs to the eIF-3 subunit I family. Component of the eukaryotic translation initiation factor 3 (eIF-3) complex. The eIF-3 complex interacts with pix.

The protein localises to the cytoplasm. In terms of biological role, component of the eukaryotic translation initiation factor 3 (eIF-3) complex, which is involved in protein synthesis of a specialized repertoire of mRNAs and, together with other initiation factors, stimulates binding of mRNA and methionyl-tRNAi to the 40S ribosome. The eIF-3 complex specifically targets and initiates translation of a subset of mRNAs involved in cell proliferation. The chain is Eukaryotic translation initiation factor 3 subunit I from Drosophila yakuba (Fruit fly).